A 356-amino-acid polypeptide reads, in one-letter code: Cysteine proteinase 3 (356 aa).

Positions 1 to 16 (MSRLSLVLILVAGLFA) are cleaved as a signal peptide. The propeptide at 17-138 (TALAGPATFA…KGNLKLTNVV (122 aa)) is activation peptide. The N-linked (GlcNAc...) asparagine glycan is linked to asparagine 123. Disulfide bonds link cysteine 160-cysteine 203 and cysteine 194-cysteine 236. Cysteine 163 is a catalytic residue. A glycan (N-linked (GlcNAc...) asparagine) is linked at asparagine 252. Residues cysteine 294 and cysteine 344 are joined by a disulfide bond. Residues histidine 303 and asparagine 323 contribute to the active site.

This sequence belongs to the peptidase C1 family. As to expression, predominantly expressed in stem and root.

Its subcellular location is the vacuole. This Solanum lycopersicum (Tomato) protein is Cysteine proteinase 3 (CYP-3).